The chain runs to 109 residues: MQQLEFYHIAFLILAVILEIIANILLKMSDGFRRVWLGILSLLSVLGAFSALAQAVKGIELSVAYALWGGFGIAATVAAGWILFNQRLNYKGWIGLILLLAGMVMIKLS.

4 helical membrane passes run 6–26, 35–55, 64–84, and 88–108; these read FYHI…NILL, VWLG…LAQA, AYAL…WILF, and LNYK…MIKL.

The protein belongs to the drug/metabolite transporter (DMT) superfamily. Small multidrug resistance (SMR) (TC 2.A.7.1) family. MdtI subfamily. As to quaternary structure, forms a complex with MdtJ.

It is found in the cell inner membrane. In terms of biological role, catalyzes the excretion of spermidine. This Yersinia enterocolitica serotype O:8 / biotype 1B (strain NCTC 13174 / 8081) protein is Spermidine export protein MdtI.